A 207-amino-acid polypeptide reads, in one-letter code: Large ribosomal subunit protein uL4 (207 aa).

A disordered region spans residues 44 to 78 (MRQGTHKTKNRAEVSGGGRKPWRQKGTGRARQGSI).

This sequence belongs to the universal ribosomal protein uL4 family. As to quaternary structure, part of the 50S ribosomal subunit.

Functionally, one of the primary rRNA binding proteins, this protein initially binds near the 5'-end of the 23S rRNA. It is important during the early stages of 50S assembly. It makes multiple contacts with different domains of the 23S rRNA in the assembled 50S subunit and ribosome. In terms of biological role, this protein when expressed in E.coli represses the endogenous S10 operon; this may not occur in B.stearothermophilus however. Its function is as follows. Forms part of the polypeptide exit tunnel. This Geobacillus stearothermophilus (Bacillus stearothermophilus) protein is Large ribosomal subunit protein uL4 (rplD).